Consider the following 604-residue polypeptide: Ectonucleoside triphosphate diphosphohydrolase 7 (604 aa).

At 1 to 28 (MARISFSYLCPASWYFTVPTVSPFLRQR) the chain is on the cytoplasmic side. The chain crosses the membrane as a helical span at residues 29 to 49 (VAFLGLFFISCLLLLMLIIDF). Residues 50–546 (RHWSASLPRD…QAHGSWFRLS (497 aa)) are Vesicular-facing. E217 (proton acceptor) is an active-site residue. Residue N330 is glycosylated (N-linked (GlcNAc...) asparagine). C448 and C477 are oxidised to a cystine. Residues 547 to 567 (FVYNHYLFFACILVVLLAIVL) traverse the membrane as a helical segment. The Cytoplasmic segment spans residues 568–604 (YLLRLRRIHHRQTRASAPLDLLWLEEVVPMMGVQVGP).

Belongs to the GDA1/CD39 NTPase family. Ca(2+) serves as cofactor. Requires Mg(2+) as cofactor.

The protein resides in the cytoplasmic vesicle membrane. It carries out the reaction a ribonucleoside 5'-triphosphate + H2O = a ribonucleoside 5'-diphosphate + phosphate + H(+). It catalyses the reaction UTP + H2O = UDP + phosphate + H(+). The enzyme catalyses GTP + H2O = GDP + phosphate + H(+). The catalysed reaction is CTP + H2O = CDP + phosphate + H(+). Catalyzes the hydrolysis of nucleoside triphosphates and diphosphates in a calcium- or magnesium-dependent manner. Preferentially hydrolyzes nucleoside 5'-triphosphates, with substrate preference for UTP &gt; GTP &gt; CTP. Hydrolyzes ATP and nucleoside diphosphates only to a minor extent. This Pongo abelii (Sumatran orangutan) protein is Ectonucleoside triphosphate diphosphohydrolase 7 (ENTPD7).